The primary structure comprises 617 residues: Type IV inositol polyphosphate 5-phosphatase 6 (617 aa).

Disordered regions lie at residues 30-62 (EFQA…KNTK) and 241-330 (DFDP…VLYS). The segment covering 242–253 (FDPSFRGSSSSH) has biased composition (low complexity). The segment covering 254–290 (RPSDYSRRPSDYSRRPSDYSRRPSDYSRRPSDSRPSD) has biased composition (basic and acidic residues). Over residues 291-311 (YSRPSDYYSRPSDYSRPSDFS) the composition is skewed to low complexity. Catalytic stretches follow at residues 458–473 (DRVI…IALS) and 538–553 (KRRT…WFGE).

It belongs to the inositol polyphosphate 5-phosphatase family. In terms of tissue distribution, broadly expressed in emerging organs. Mostly localized in procambium of growing organs. Restricted to vascular differentiating cells of young organs.

The enzyme catalyses a 1,2-diacyl-sn-glycero-3-phospho-(1D-myo-inositol-4,5-bisphosphate) + H2O = a 1,2-diacyl-sn-glycero-3-phospho-(1D-myo-inositol 4-phosphate) + phosphate. It catalyses the reaction a 1,2-diacyl-sn-glycero-3-phospho-(1D-myo-inositol-3,4,5-trisphosphate) + H2O = a 1,2-diacyl-sn-glycero-3-phospho-(1D-myo-inositol-3,4-bisphosphate) + phosphate. Functionally, has phosphatase activity toward PtdIns(4,5)P2 and PtdIns(3,4,5)P3. Required for the patterning of procambium and during the differentiation of vascular tissues. Acts before the acquisition of preprocambial identity. Seems to be also involved in the abscisic acid (ABA) signaling pathway. Acts redundantly with CVL1 for maintaining vascular continuity. Regulates phosphoinositide-dependent VAN3 localization. The protein is Type IV inositol polyphosphate 5-phosphatase 6 of Arabidopsis thaliana (Mouse-ear cress).